The chain runs to 145 residues: D-aminoacyl-tRNA deacylase (145 aa).

The Gly-cisPro motif, important for rejection of L-amino acids signature appears at 137 to 138 (GP).

This sequence belongs to the DTD family. In terms of assembly, homodimer.

It localises to the cytoplasm. It carries out the reaction glycyl-tRNA(Ala) + H2O = tRNA(Ala) + glycine + H(+). It catalyses the reaction a D-aminoacyl-tRNA + H2O = a tRNA + a D-alpha-amino acid + H(+). In terms of biological role, an aminoacyl-tRNA editing enzyme that deacylates mischarged D-aminoacyl-tRNAs. Also deacylates mischarged glycyl-tRNA(Ala), protecting cells against glycine mischarging by AlaRS. Acts via tRNA-based rather than protein-based catalysis; rejects L-amino acids rather than detecting D-amino acids in the active site. By recycling D-aminoacyl-tRNA to D-amino acids and free tRNA molecules, this enzyme counteracts the toxicity associated with the formation of D-aminoacyl-tRNA entities in vivo and helps enforce protein L-homochirality. In Pectobacterium carotovorum subsp. carotovorum (strain PC1), this protein is D-aminoacyl-tRNA deacylase.